Consider the following 91-residue polypeptide: Small ribosomal subunit protein uS15 (91 aa).

Belongs to the universal ribosomal protein uS15 family. In terms of assembly, part of the 30S ribosomal subunit. Forms a bridge to the 50S subunit in the 70S ribosome, contacting the 23S rRNA.

In terms of biological role, one of the primary rRNA binding proteins, it binds directly to 16S rRNA where it helps nucleate assembly of the platform of the 30S subunit by binding and bridging several RNA helices of the 16S rRNA. Functionally, forms an intersubunit bridge (bridge B4) with the 23S rRNA of the 50S subunit in the ribosome. This is Small ribosomal subunit protein uS15 from Rickettsia canadensis (strain McKiel).